The chain runs to 521 residues: Histidine--tRNA ligase (521 aa).

Residues 137–139 (DLT), Arg-164, Gln-180, Asp-184, Arg-338, and 342–343 (YY) contribute to the L-histidine site.

The protein belongs to the class-II aminoacyl-tRNA synthetase family.

The catalysed reaction is tRNA(His) + L-histidine + ATP = L-histidyl-tRNA(His) + AMP + diphosphate + H(+). Involved in protein synthesis. Catalyzes the specific attachment of an amino acid to its cognate tRNA in a 2 step reaction: the amino acid (AA) is first activated by ATP to form AA-AMP and then transferred to the acceptor end of the tRNA. Required for germ cell development. This is Histidine--tRNA ligase from Caenorhabditis elegans.